The sequence spans 258 residues: 2S seed storage albumin protein (258 aa).

The N-terminal stretch at 1 to 24 (MAKLIPTIALVSVLLFIIANASFA) is a signal peptide. Positions 25 to 35 (YRTTITTIEID) are excised as a propeptide. Cystine bridges form between cysteine 49–cysteine 108, cysteine 61–cysteine 97, cysteine 98–cysteine 145, and cysteine 110–cysteine 149. Positions 64–87 (YLRQSSSRRSPGEEVLRMPGDENQ) are disordered. Serine 69 carries the phosphoserine modification. Positions 73 to 83 (SPGEEVLRMPG) are enriched in basic and acidic residues. The propeptide occupies 77-86 (EVLRMPGDEN). The residue at position 87 (glutamine 87) is a Pyrrolidone carboxylic acid. Propeptides lie at residues 154–156 (RTN) and 191–193 (SDN). 4 disulfide bridges follow: cysteine 162–cysteine 212, cysteine 175–cysteine 201, cysteine 202–cysteine 249, and cysteine 214–cysteine 256. Residue glutamine 194 is modified to Pyrrolidone carboxylic acid.

Belongs to the 2S seed storage albumins family. The 2 mature proteins consist of heterodimers of a small and a large chain; disulfide-linked. Post-translationally, the N-terminus of both large chains is blocked. The C-terminus of the allergen Ric c 1 and allergen Ric c 3 small chains are heterogeneous and the length of the chains can vary from 33 to 36 amino acids and from 36 to 40 amino acids respectively.

Its function is as follows. 2S seed storage proteins. The chain is 2S seed storage albumin protein from Ricinus communis (Castor bean).